Reading from the N-terminus, the 478-residue chain is Succinyl-CoA:acetate/propanoyl-CoA:succinate CoA transferase (478 aa).

Residues Met1–Gln30 constitute a mitochondrion transit peptide. CoA is bound at residue Gly256–Ile260. Residue Glu279 is the 5-glutamyl coenzyme A thioester intermediate of the active site. The CoA site is built by Ile354, Gly377, and Lys404.

It belongs to the acetyl-CoA hydrolase/transferase family.

The protein localises to the mitochondrion. The catalysed reaction is succinyl-CoA + acetate = succinate + acetyl-CoA. It catalyses the reaction propanoyl-CoA + succinate = propanoate + succinyl-CoA. Transferase involved in anaerobic fumarate-respiration in the mitochondria. Catalyzes the transfer of the CoA moiety of acetyl-CoA or propionyl-CoA to succinate, thereby forming acetate and propionate, respectively. Acetate and propionate are the two major metabolic end products in the anaerobic mitochondrial metabolism of F.hepatica. Also displays CoA transferase activities from acetyl-CoA to propionate, acetate and butyrate. This chain is Succinyl-CoA:acetate/propanoyl-CoA:succinate CoA transferase, found in Fasciola hepatica (Liver fluke).